The following is a 444-amino-acid chain: ATP-dependent protease ATPase subunit HslU (444 aa).

ATP is bound by residues isoleucine 18 and 60-65 (GVGKTE). The interval 141 to 161 (DAWGNNEEGNNDSGTRQSFRK) is disordered. The segment covering 147–157 (EEGNNDSGTRQ) has biased composition (polar residues). ATP-binding residues include aspartate 257, glutamate 322, and arginine 394.

This sequence belongs to the ClpX chaperone family. HslU subfamily. As to quaternary structure, a double ring-shaped homohexamer of HslV is capped on each side by a ring-shaped HslU homohexamer. The assembly of the HslU/HslV complex is dependent on binding of ATP.

The protein localises to the cytoplasm. Its function is as follows. ATPase subunit of a proteasome-like degradation complex; this subunit has chaperone activity. The binding of ATP and its subsequent hydrolysis by HslU are essential for unfolding of protein substrates subsequently hydrolyzed by HslV. HslU recognizes the N-terminal part of its protein substrates and unfolds these before they are guided to HslV for hydrolysis. In Aliivibrio fischeri (strain ATCC 700601 / ES114) (Vibrio fischeri), this protein is ATP-dependent protease ATPase subunit HslU.